We begin with the raw amino-acid sequence, 598 residues long: uncharacterized protein (598 aa).

D397, D408, E506, and E520 together coordinate Mn(2+).

Belongs to the peptidase M24B family. The cofactor is Mn(2+).

This is an uncharacterized protein from Schizosaccharomyces pombe (strain 972 / ATCC 24843) (Fission yeast).